Here is a 316-residue protein sequence, read N- to C-terminus: UDP-3-O-acylglucosamine N-acyltransferase 2 (316 aa).

Histidine 230 serves as the catalytic Proton acceptor.

Belongs to the transferase hexapeptide repeat family. LpxD subfamily. As to quaternary structure, homotrimer.

The catalysed reaction is a UDP-3-O-[(3R)-3-hydroxyacyl]-alpha-D-glucosamine + a (3R)-hydroxyacyl-[ACP] = a UDP-2-N,3-O-bis[(3R)-3-hydroxyacyl]-alpha-D-glucosamine + holo-[ACP] + H(+). It functions in the pathway bacterial outer membrane biogenesis; LPS lipid A biosynthesis. In terms of biological role, catalyzes the N-acylation of UDP-3-O-acylglucosamine using 3-hydroxyacyl-ACP as the acyl donor. Is involved in the biosynthesis of lipid A, a phosphorylated glycolipid that anchors the lipopolysaccharide to the outer membrane of the cell. This is UDP-3-O-acylglucosamine N-acyltransferase 2 from Sulfurimonas denitrificans (strain ATCC 33889 / DSM 1251) (Thiomicrospira denitrificans (strain ATCC 33889 / DSM 1251)).